The following is a 353-amino-acid chain: MNEPRIVAPQPTTSEQYFEETLRPRRLAEYIGQDRVKESLAIAIRAAQERGEPLDHLLFYGPPGLGKTTLAGIIAAEMGVNLRITSGPAIERPGDLVSILTNLRPGDVLFIDEIHRLNRLVEEILYPAMEDFAVDLVIGKGPAARSVRIALPRFTLVGATTRLALLTSPLRDRFGATYRLDFYDTAALRAIVERAARILQVPITSDGAEEIARRGRGTPRIAIRLLKRVRDYAQVIGDGTITRELARLALDQLAVDELGLDEVDRLILRTLVEKFDGGPVGIQTLAAATSEEPDTIESVYEPYLLQLGFLQRTPRGRIATRRAYEHLGLTYPENRLQLEIPFEHAASERSSDA.

The large ATPase domain (RuvB-L) stretch occupies residues 1-183 (MNEPRIVAPQ…FGATYRLDFY (183 aa)). ATP contacts are provided by residues leucine 22, arginine 23, glycine 64, lysine 67, threonine 68, threonine 69, 130–132 (EDF), arginine 173, tyrosine 183, and arginine 220. Threonine 68 contacts Mg(2+). Positions 184–254 (DTAALRAIVE…LARLALDQLA (71 aa)) are small ATPAse domain (RuvB-S). Positions 257–353 (ELGLDEVDRL…HAASERSSDA (97 aa)) are head domain (RuvB-H). DNA contacts are provided by arginine 312 and arginine 317.

This sequence belongs to the RuvB family. In terms of assembly, homohexamer. Forms an RuvA(8)-RuvB(12)-Holliday junction (HJ) complex. HJ DNA is sandwiched between 2 RuvA tetramers; dsDNA enters through RuvA and exits via RuvB. An RuvB hexamer assembles on each DNA strand where it exits the tetramer. Each RuvB hexamer is contacted by two RuvA subunits (via domain III) on 2 adjacent RuvB subunits; this complex drives branch migration. In the full resolvosome a probable DNA-RuvA(4)-RuvB(12)-RuvC(2) complex forms which resolves the HJ.

The protein resides in the cytoplasm. The enzyme catalyses ATP + H2O = ADP + phosphate + H(+). In terms of biological role, the RuvA-RuvB-RuvC complex processes Holliday junction (HJ) DNA during genetic recombination and DNA repair, while the RuvA-RuvB complex plays an important role in the rescue of blocked DNA replication forks via replication fork reversal (RFR). RuvA specifically binds to HJ cruciform DNA, conferring on it an open structure. The RuvB hexamer acts as an ATP-dependent pump, pulling dsDNA into and through the RuvAB complex. RuvB forms 2 homohexamers on either side of HJ DNA bound by 1 or 2 RuvA tetramers; 4 subunits per hexamer contact DNA at a time. Coordinated motions by a converter formed by DNA-disengaged RuvB subunits stimulates ATP hydrolysis and nucleotide exchange. Immobilization of the converter enables RuvB to convert the ATP-contained energy into a lever motion, pulling 2 nucleotides of DNA out of the RuvA tetramer per ATP hydrolyzed, thus driving DNA branch migration. The RuvB motors rotate together with the DNA substrate, which together with the progressing nucleotide cycle form the mechanistic basis for DNA recombination by continuous HJ branch migration. Branch migration allows RuvC to scan DNA until it finds its consensus sequence, where it cleaves and resolves cruciform DNA. The sequence is that of Holliday junction branch migration complex subunit RuvB from Thermomicrobium roseum (strain ATCC 27502 / DSM 5159 / P-2).